We begin with the raw amino-acid sequence, 29 residues long: Dermaseptin-J6 (29 aa).

Val-29 bears the Valine amide mark.

As to expression, expressed by the skin glands.

Its subcellular location is the secreted. Its function is as follows. Has antimicrobial activity. This chain is Dermaseptin-J6, found in Phasmahyla jandaia (Jandaia leaf frog).